Here is an 87-residue protein sequence, read N- to C-terminus: Cell division topological specificity factor (87 aa).

Belongs to the MinE family.

Its function is as follows. Prevents the cell division inhibition by proteins MinC and MinD at internal division sites while permitting inhibition at polar sites. This ensures cell division at the proper site by restricting the formation of a division septum at the midpoint of the long axis of the cell. This Delftia acidovorans (strain DSM 14801 / SPH-1) protein is Cell division topological specificity factor.